The sequence spans 90 residues: Spore coat protein F-like protein YgzC (90 aa).

It belongs to the CotF family.

The protein resides in the spore coat. The protein is Spore coat protein F-like protein YgzC (ygzC) of Bacillus subtilis (strain 168).